The chain runs to 261 residues: Calcium-binding protein 8 (261 aa).

The segment at 1 to 41 (MRLPEQPGDGKPENETKGDQETPERGEEPRRSPAPDFPTWE) is disordered. Residues 1 to 234 (MRLPEQPGDG…QNRQTCVRKS (234 aa)) lie on the Cytoplasmic side of the membrane. Residues 8-33 (GDGKPENETKGDQETPERGEEPRRSP) show a composition bias toward basic and acidic residues. EF-hand domains lie at 78-113 (EELDEIREAFRVLDRDGNGFISKQELGMAMRSLGYM) and 114-149 (PSEVELAIIMQRLDMDGDGQVDFDEFMTILGPKLVS). Ca(2+)-binding residues include Asp91, Asp93, Asn95, Glu102, Asp127, Asp129, Asp131, Gln133, and Glu138. Residues 235–255 (LICAFAMAFIISVMLIAANQI) traverse the membrane as a helical; Anchor for type IV membrane protein segment. Residues 256–261 (LRSGME) are Extracellular-facing.

As to quaternary structure, interacts with PI4KB. This binding competes with FREQ/NCS1 binding in a calcium-dependent manner. Brain-specific. High expression in the cerebellum, hippocampus, and cortex.

It is found in the golgi apparatus. It localises to the trans-Golgi network membrane. The protein localises to the cytoplasm. The protein resides in the perinuclear region. Its subcellular location is the cell membrane. Negatively regulates Golgi-to-plasma membrane trafficking by interacting with PI4KB and inhibiting its activity. May play a role in the physiology of neurons and is potentially important in memory and learning. The chain is Calcium-binding protein 8 (Caln1) from Mus musculus (Mouse).